A 338-amino-acid chain; its full sequence is Holliday junction branch migration complex subunit RuvB (338 aa).

The tract at residues 4-186 (ADRLIAPDNP…FGITQRLEYY (183 aa)) is large ATPase domain (RuvB-L). ATP is bound by residues Ile25, Arg26, Gly67, Lys70, Thr71, Thr72, 133–135 (EDY), Arg176, Tyr186, and Arg223. Thr71 serves as a coordination point for Mg(2+). Residues 187–257 (KVEDLQNIVQ…VADKALNMLD (71 aa)) are small ATPAse domain (RuvB-S). Positions 260–338 (AKGFDYMDRK…HFGIDKPSNR (79 aa)) are head domain (RuvB-H). Positions 296, 315, and 320 each coordinate DNA.

It belongs to the RuvB family. Homohexamer. Forms an RuvA(8)-RuvB(12)-Holliday junction (HJ) complex. HJ DNA is sandwiched between 2 RuvA tetramers; dsDNA enters through RuvA and exits via RuvB. An RuvB hexamer assembles on each DNA strand where it exits the tetramer. Each RuvB hexamer is contacted by two RuvA subunits (via domain III) on 2 adjacent RuvB subunits; this complex drives branch migration. In the full resolvosome a probable DNA-RuvA(4)-RuvB(12)-RuvC(2) complex forms which resolves the HJ.

It is found in the cytoplasm. It catalyses the reaction ATP + H2O = ADP + phosphate + H(+). In terms of biological role, the RuvA-RuvB-RuvC complex processes Holliday junction (HJ) DNA during genetic recombination and DNA repair, while the RuvA-RuvB complex plays an important role in the rescue of blocked DNA replication forks via replication fork reversal (RFR). RuvA specifically binds to HJ cruciform DNA, conferring on it an open structure. The RuvB hexamer acts as an ATP-dependent pump, pulling dsDNA into and through the RuvAB complex. RuvB forms 2 homohexamers on either side of HJ DNA bound by 1 or 2 RuvA tetramers; 4 subunits per hexamer contact DNA at a time. Coordinated motions by a converter formed by DNA-disengaged RuvB subunits stimulates ATP hydrolysis and nucleotide exchange. Immobilization of the converter enables RuvB to convert the ATP-contained energy into a lever motion, pulling 2 nucleotides of DNA out of the RuvA tetramer per ATP hydrolyzed, thus driving DNA branch migration. The RuvB motors rotate together with the DNA substrate, which together with the progressing nucleotide cycle form the mechanistic basis for DNA recombination by continuous HJ branch migration. Branch migration allows RuvC to scan DNA until it finds its consensus sequence, where it cleaves and resolves cruciform DNA. The sequence is that of Holliday junction branch migration complex subunit RuvB from Vibrio atlanticus (strain LGP32) (Vibrio splendidus (strain Mel32)).